The following is a 393-amino-acid chain: Probable WRKY transcription factor 25 (393 aa).

The segment at residues 160-224 (MVSRNSNDGY…YKGGHNHPKP (65 aa)) is a DNA-binding region (WRKY 1). Residues C191, C196, H219, and H221 each coordinate Zn(2+). 2 disordered regions span residues 217 to 242 (GGHN…VNGR) and 277 to 303 (SEYG…DEGM). The segment covering 229–240 (RPSQSSLPSSVN) has biased composition (polar residues). A compositionally biased stretch (basic and acidic residues) spans 289 to 298 (PEMKRMKREG). The segment at residues 322 to 387 (SDIDVLIDGF…YEGRHNHDIP (66 aa)) is a DNA-binding region (WRKY 2). 4 residues coordinate Zn(2+): C353, C358, H382, and H384.

Belongs to the WRKY group I family. In terms of assembly, interacts with MKS1. Interacts with SIB1. Interacts with VQ10 and CAMBP25/VQ15. Post-translationally, phosphorylated by MPK4. Highly expressed in roots and at lower levels in leaves, stems and seeds.

It localises to the nucleus. Its function is as follows. Transcription factor. Interacts specifically with the W box (5'-(T)TGAC[CT]-3'), a frequently occurring elicitor-responsive cis-acting element. Functions with WRKY33 as positive regulator of salt stress response and abscisic acid (ABA) signaling. Plays a partial role in heat stress tolerance. Functions with WRKY26 and WRKY33 as positive regulator of plant thermotolerance by partially participating in ethylene-response signal transduction pathway. This is Probable WRKY transcription factor 25 (WRKY25) from Arabidopsis thaliana (Mouse-ear cress).